The primary structure comprises 306 residues: MTINIKTDSPIITTGSQLDAITTETVGQSGEVKKTEDTRHEAQAIKSSEASLSRSQVPELIKPSQGINVALLSKSQGDLNGTLSILLLLLELARKAREMGLQQRDIENKATISAQKEQVAEMVSGAKLMIAMAVVSGIMAATSTVASAFSIAKEVKIVKQEQILNSNIAGRDQLIDTKMQQMSNAGDKAVSREDIGRIWKPEQVADQNKLALLDKEFRMTDSKANAFNAATQPLGQMANSAIQVHQGYSQAEVKEKEVNASIAANEKQKAEEAMNYNDNFMKDVLRLIEQYVSSHTHAMKAAFGVV.

Residues Leu128 to Ala152 traverse the membrane as a helical segment.

The protein belongs to the SctB/YopD family. The core secretion machinery of the T3SS is composed of approximately 20 different proteins, including cytoplasmic components, a base, an export apparatus and a needle. This subunit is involved in the formation of a pore, called the translocon, in host membrane. Interacts with YopB/SctE and YopE. Together with YopB/SctE, forms a multimeric integral membrane complex with a mass of between 500 and 700 kDa. Interacts with its cognate chaperone SycD.

It localises to the secreted. The protein localises to the host membrane. Component of the type III secretion system (T3SS), also called injectisome, which is used to inject bacterial effector proteins into eukaryotic host cells. YopB/SctE and YopD/SctB are inserted into the host membrane where they form a pore and allow the translocation of effector proteins into the cytosol of target cells. In terms of biological role, involved in pathogenesis. Essential for the establishment of Yersinia infections in a mouse model system, but not for the targeting of effector Yops. May modulate the host's immune response at a distance from the site of infection. This is Type 3 secretion system translocon protein SctB from Yersinia enterocolitica.